A 343-amino-acid chain; its full sequence is Heat-inducible transcription repressor HrcA (343 aa).

The protein belongs to the HrcA family.

In terms of biological role, negative regulator of class I heat shock genes (grpE-dnaK-dnaJ and groELS operons). Prevents heat-shock induction of these operons. This is Heat-inducible transcription repressor HrcA from Bacillus velezensis (strain DSM 23117 / BGSC 10A6 / LMG 26770 / FZB42) (Bacillus amyloliquefaciens subsp. plantarum).